The sequence spans 506 residues: GTPase Der (506 aa).

EngA-type G domains are found at residues 3–166 (PVVA…GEQL) and 218–391 (IKIA…ACAT). Residues 9-16 (GRPNVGKS), 56-60 (DTGGI), 118-121 (NKTD), 224-231 (GRPNVGKS), 271-275 (DTAGV), and 336-339 (NKWD) contribute to the GTP site. Residues 392–476 (QKNSTSMLTR…PIRIQFQEGN (85 aa)) form the KH-like domain.

Belongs to the TRAFAC class TrmE-Era-EngA-EngB-Septin-like GTPase superfamily. EngA (Der) GTPase family. In terms of assembly, associates with the 50S ribosomal subunit.

Functionally, GTPase that plays an essential role in the late steps of ribosome biogenesis. The sequence is that of GTPase Der from Actinobacillus pleuropneumoniae serotype 7 (strain AP76).